Here is a 257-residue protein sequence, read N- to C-terminus: Taurine import ATP-binding protein TauB (257 aa).

The region spanning 6–233 is the ABC transporter domain; the sequence is LDKISIHYDG…RYAAGEPIRA (228 aa). 38-45 serves as a coordination point for ATP; that stretch reads GRSGCGKT.

It belongs to the ABC transporter superfamily. Taurine importer (TC 3.A.1.17.1) family. In terms of assembly, the complex is composed of two ATP-binding proteins (TauB), two transmembrane proteins (TauC) and a solute-binding protein (TauA).

Its subcellular location is the cell inner membrane. It catalyses the reaction taurine(out) + ATP + H2O = taurine(in) + ADP + phosphate + H(+). Part of the ABC transporter complex TauABC involved in taurine import. Responsible for energy coupling to the transport system. The sequence is that of Taurine import ATP-binding protein TauB from Mesorhizobium japonicum (strain LMG 29417 / CECT 9101 / MAFF 303099) (Mesorhizobium loti (strain MAFF 303099)).